The primary structure comprises 785 residues: Endonuclease MutS2 (785 aa).

335-342 (GPNTGGKT) provides a ligand contact to ATP. In terms of domain architecture, Smr spans 710-785 (LDLRGERYED…GNGVTIVEFK (76 aa)).

This sequence belongs to the DNA mismatch repair MutS family. MutS2 subfamily. Homodimer. Binds to stalled ribosomes, contacting rRNA.

Functionally, endonuclease that is involved in the suppression of homologous recombination and thus may have a key role in the control of bacterial genetic diversity. Acts as a ribosome collision sensor, splitting the ribosome into its 2 subunits. Detects stalled/collided 70S ribosomes which it binds and splits by an ATP-hydrolysis driven conformational change. Acts upstream of the ribosome quality control system (RQC), a ribosome-associated complex that mediates the extraction of incompletely synthesized nascent chains from stalled ribosomes and their subsequent degradation. Probably generates substrates for RQC. The sequence is that of Endonuclease MutS2 from Listeria monocytogenes serotype 4b (strain F2365).